Reading from the N-terminus, the 797-residue chain is Short transient receptor potential channel 4-associated protein (797 aa).

Ala-2 is subject to N-acetylalanine. The interaction with TNFRSF1A stretch occupies residues 2–400; it reads AAAPAAAGAG…VLYVLCVLLM (399 aa).

Component of the DCX(TRPC4AP) E3 ubiquitin ligase complex, at least composed of CUL4A, DDB1, TRPC4AP/TRUSS and RBX1. Interacts with MYC. Constitutively associated with TNFRSF1A. Directly interacts with TRADD, TRAF2, CHUK, IKBKB and IKBKG. Interacts with TRPC1, TRPC4 and TRPC5. Phosphorylated by GSK3B; phosphorylation is required for ubiquitination. Post-translationally, ubiquitinated by a SCF (SKP1-CUL1-F-box protein) E3 ubiquitin-protein ligase containing SKP2, leading to its degradation. Phosphorylation by GSK3B is required for ubiquitination. Widely expressed, with high levels in heart, liver and testis.

It localises to the cytoplasm. It is found in the perinuclear region. It functions in the pathway protein modification; protein ubiquitination. Functionally, substrate-recognition component of a DCX (DDB1-CUL4-X-box) E3 ubiquitin-protein ligase complex required for cell cycle control. The DCX(TRPC4AP) complex specifically mediates the polyubiquitination and subsequent degradation of MYC as part of the DesCEND (destruction via C-end degrons) pathway. The DesCEND (destruction via C-end degrons) pathway recognizes a C-degron located at the extreme C terminus of target proteins, leading to their ubiquitination and degradation. The DCX(TRPC4AP) complex specifically recognizes proteins with an arginine at the minus 3 position (R-3 motif) at the C-terminus, such as MYC, leading to their ubiquitination and degradation. Also participates in the activation of NFKB1 in response to ligation of TNFRSF1A, possibly by linking TNFRSF1A to the IKK signalosome. Involved in JNK activation via its interaction with TRAF2. Also involved in elevation of endoplasmic reticulum Ca(2+) storage reduction in response to CHRM1. The protein is Short transient receptor potential channel 4-associated protein of Mus musculus (Mouse).